An 84-amino-acid polypeptide reads, in one-letter code: Small ribosomal subunit protein uS17c (84 aa).

The protein belongs to the universal ribosomal protein uS17 family. As to quaternary structure, part of the 30S ribosomal subunit.

It is found in the plastid. Its subcellular location is the chloroplast. One of the primary rRNA binding proteins, it binds specifically to the 5'-end of 16S ribosomal RNA. The protein is Small ribosomal subunit protein uS17c (rps17) of Trieres chinensis (Marine centric diatom).